A 281-amino-acid polypeptide reads, in one-letter code: Diaminopimelate epimerase (281 aa).

Positions 14 and 65 each coordinate substrate. The Proton donor role is filled by Cys74. Residues 75–76 (GN), Asn165, Asn198, and 216–217 (ER) each bind substrate. The active-site Proton acceptor is the Cys225. 226-227 (GT) provides a ligand contact to substrate.

The protein belongs to the diaminopimelate epimerase family. Homodimer.

Its subcellular location is the cytoplasm. It carries out the reaction (2S,6S)-2,6-diaminopimelate = meso-2,6-diaminopimelate. Its pathway is amino-acid biosynthesis; L-lysine biosynthesis via DAP pathway; DL-2,6-diaminopimelate from LL-2,6-diaminopimelate: step 1/1. Functionally, catalyzes the stereoinversion of LL-2,6-diaminopimelate (L,L-DAP) to meso-diaminopimelate (meso-DAP), a precursor of L-lysine and an essential component of the bacterial peptidoglycan. This chain is Diaminopimelate epimerase, found in Leptospira borgpetersenii serovar Hardjo-bovis (strain JB197).